A 931-amino-acid chain; its full sequence is Protein translocase subunit SecA (931 aa).

Residues glutamine 87, 105–109 (GEGKT), and aspartate 515 contribute to the ATP site. 4 residues coordinate Zn(2+): cysteine 915, cysteine 917, cysteine 926, and histidine 927.

This sequence belongs to the SecA family. In terms of assembly, monomer and homodimer. Part of the essential Sec protein translocation apparatus which comprises SecA, SecYEG and auxiliary proteins SecDF-YajC and YidC. Requires Zn(2+) as cofactor.

The protein localises to the cell inner membrane. The protein resides in the cytoplasm. It catalyses the reaction ATP + H2O + cellular proteinSide 1 = ADP + phosphate + cellular proteinSide 2.. In terms of biological role, part of the Sec protein translocase complex. Interacts with the SecYEG preprotein conducting channel. Has a central role in coupling the hydrolysis of ATP to the transfer of proteins into and across the cell membrane, serving both as a receptor for the preprotein-SecB complex and as an ATP-driven molecular motor driving the stepwise translocation of polypeptide chains across the membrane. The protein is Protein translocase subunit SecA of Burkholderia ambifaria (strain MC40-6).